A 349-amino-acid polypeptide reads, in one-letter code: N-formyl peptide receptor 3 (349 aa).

Residues 1-27 (METNFSIPLNESEEVLPEPAGHTVLWI) lie on the Extracellular side of the membrane. Residues asparagine 4 and asparagine 10 are each glycosylated (N-linked (GlcNAc...) asparagine). Residues 28-50 (FSLLVHGVTFIFGVLGNGLVIWV) form a helical membrane-spanning segment. Topologically, residues 51–61 (AGFRMTRTVNT) are cytoplasmic. Residues 62-83 (ICYLNLALADFSFSAILPFRMV) form a helical membrane-spanning segment. Topologically, residues 84–100 (SVAMREKWPFGTFLCKL) are extracellular. Cysteine 98 and cysteine 176 are joined by a disulfide. Residues 101–121 (VHVMIDINLFVSVYLITIIAL) form a helical membrane-spanning segment. The Cytoplasmic segment spans residues 122-140 (DRCICVLHPAWAQNHRTMS). Residues 141–162 (LAKRVMMGLWILAIVLTLPNFI) form a helical membrane-spanning segment. Residues 163–205 (FWTTISTKNGDTYCIFNFPFWGDTAVERLNAFITMGKVFLILH) lie on the Extracellular side of the membrane. A helical transmembrane segment spans residues 206-226 (FIIGFSMPMSIITVCYGIIAA). Residues 227–242 (KIHRNHMIKSSSPLRV) are Cytoplasmic-facing. Residues 243–266 (FAAVVASFFICWFPYELIGILMAV) form a helical membrane-spanning segment. At 267 to 286 (WLKEMLLNGKYKIILVLLNP) the chain is on the extracellular side. A helical transmembrane segment spans residues 287–306 (TSSLAFFNSCLNPILYVFLG). Topologically, residues 307-349 (SNFQERLIRSLPTSLERALTEVPDSAQTSNTHTNSASPPEETE) are cytoplasmic. The disordered stretch occupies residues 328 to 349 (VPDSAQTSNTHTNSASPPEETE). The segment covering 331–343 (SAQTSNTHTNSAS) has biased composition (polar residues).

The protein belongs to the G-protein coupled receptor 1 family.

It localises to the cell membrane. Its function is as follows. Low affinity receptor for N-formyl-methionyl peptides, which are powerful neutrophils chemotactic factors. Binding of FMLP to the receptor causes activation of neutrophils. This response is mediated via a G-protein that activates a phosphatidylinositol-calcium second messenger system. In Pongo pygmaeus (Bornean orangutan), this protein is N-formyl peptide receptor 3 (FPR3).